A 247-amino-acid polypeptide reads, in one-letter code: Ribonuclease 3 (247 aa).

The RNase III domain maps to 5–147; it reads LIALQERLQH…LIGAVYLDAG (143 aa). A Mg(2+)-binding site is contributed by Glu-40. Asp-44 is an active-site residue. Positions 104 to 124 are disordered; sequence QRRSRRRCADELQPDEAGSGG. Mg(2+)-binding residues include Asp-133 and Glu-136. Glu-136 is an active-site residue. The DRBM domain maps to 174-244; that stretch reads DAKTALQEWL…AAAMLATLKA (71 aa).

This sequence belongs to the ribonuclease III family. In terms of assembly, homodimer. Mg(2+) is required as a cofactor.

It localises to the cytoplasm. The catalysed reaction is Endonucleolytic cleavage to 5'-phosphomonoester.. Its function is as follows. Digests double-stranded RNA. Involved in the processing of primary rRNA transcript to yield the immediate precursors to the large and small rRNAs (23S and 16S). Processes some mRNAs, and tRNAs when they are encoded in the rRNA operon. Processes pre-crRNA and tracrRNA of type II CRISPR loci if present in the organism. The protein is Ribonuclease 3 of Verminephrobacter eiseniae (strain EF01-2).